A 124-amino-acid polypeptide reads, in one-letter code: Membrane magnesium transporter 2 (124 aa).

A topological domain (cytoplasmic) is located at residue methionine 1. A helical membrane pass occupies residues 2–22 (VAWLWKVLVGVGLSALAHAAF). Residues 23–44 (SAAQHRSHTRLAEMKYEPLPTD) lie on the Lumenal side of the membrane. Residues 45-65 (IVLQTLLAFALTCYGVVHTAG) traverse the membrane as a helical segment. The Cytoplasmic portion of the chain corresponds to 66-124 (DFRDRDATSELKNVTFDTLRNRPSFYVFQHSGSSLLQPSDTTRSSNLNVPSSDDIRLKF).

This sequence belongs to the membrane magnesium transporter (TC 1.A.67) family.

Its subcellular location is the golgi apparatus membrane. It localises to the early endosome membrane. Functionally, mediates Mg(2+) transport. The protein is Membrane magnesium transporter 2 of Rattus norvegicus (Rat).